The primary structure comprises 174 residues: Vimentin-type intermediate filament-associated coiled-coil protein (174 aa).

A coiled-coil region spans residues 7-97 (LQIREANAHL…DQRDQMIQQL (91 aa)). Residues 128–174 (GPLPASHSHRAQLLPDGPGPPLGNNMGKEEGQDDQDDQQPAVFGTTV) form a disordered region.

The protein resides in the cytoplasm. The sequence is that of Vimentin-type intermediate filament-associated coiled-coil protein (Vmac) from Mus musculus (Mouse).